The primary structure comprises 802 residues: DEAD-box ATP-dependent RNA helicase 28 (802 aa).

The disordered stretch occupies residues 1-179 (MDADFRFDPD…TDKKSGVVDP (179 aa)). Acidic residues-rich tracts occupy residues 76-131 (GDSE…EELE) and 138-169 (KSDE…EEEE). Coiled-coil stretches lie at residues 90 to 122 (DSEE…GVEV) and 149 to 174 (QDGE…DKKS). Residues 194 to 222 (NSFLELNLSRPLLRACEALGYQKPTPIQA) carry the Q motif motif. A Helicase ATP-binding domain is found at 225–399 (IPLALTGRDI…TLSLNKPVRL (175 aa)). ATP is bound at residue 238–245 (AITGSGKT). The DEAD box motif lies at 347–350 (DEAD). In terms of domain architecture, Helicase C-terminal spans 429-573 (VLLALCLKTF…SRIVAEKPVA (145 aa)). The stretch at 572–616 (VAECAKLIEELEDQISTIIQEEREERILRKAEMEATKAENMIAHK) forms a coiled coil. The segment at 639-802 (KAAKESTSQG…KSKSRYNRRK (164 aa)) is disordered. Over residues 644–659 (STSQGKSNSGVISAQQ) the composition is skewed to polar residues. The span at 666–684 (KEKKRREREKNLPRKKRRR) shows a compositional bias: basic residues. The stretch at 671 to 712 (REREKNLPRKKRRRLEAEREMLEDESEDEEEAKESKGGKKEK) forms a coiled coil. Acidic residues predominate over residues 691 to 702 (MLEDESEDEEEA). Basic residues predominate over residues 776–802 (RSLKKNNVMRKKSKNSFKSKSRYNRRK).

This sequence belongs to the DEAD box helicase family. DDX27/DRS1 subfamily.

The catalysed reaction is ATP + H2O = ADP + phosphate + H(+). This is DEAD-box ATP-dependent RNA helicase 28 from Oryza sativa subsp. japonica (Rice).